Consider the following 192-residue polypeptide: Casparian strip membrane protein 1 (192 aa).

Residues 1 to 30 lie on the Cytoplasmic side of the membrane; the sequence is MSTTVDVPESSNVAKGKAIAVARPGGWKKG. A helical transmembrane segment spans residues 31–51; the sequence is LAIMDFILRLGGIAASLGAAA. The Extracellular portion of the chain corresponds to 52–80; the sequence is TMGTSDQTLPFFTQFFQFEASYDSFTTFQ. A helical membrane pass occupies residues 81 to 101; sequence FFVITMALVAGYLVLSLPFSV. The Cytoplasmic segment spans residues 102 to 113; sequence VAIIRPHAPGPR. A helical membrane pass occupies residues 114 to 134; the sequence is LFLIILDTVFLTLATASGASA. At 135-166 the chain is on the extracellular side; sequence AAIVYLAHNGNQDSNWLAICNQFGDFCAQTSG. A helical membrane pass occupies residues 167–187; that stretch reads AVVASFVAVVILVLLVIMSAL. Residues 188 to 192 lie on the Cytoplasmic side of the membrane; sequence ALRRH.

Belongs to the Casparian strip membrane proteins (CASP) family. As to quaternary structure, homodimer and heterodimers.

It localises to the cell membrane. In terms of biological role, regulates membrane-cell wall junctions and localized cell wall deposition. Required for establishment of the Casparian strip membrane domain (CSD) and the subsequent formation of Casparian strips, a cell wall modification of the root endodermis that determines an apoplastic barrier between the intraorganismal apoplasm and the extraorganismal apoplasm and prevents lateral diffusion. The sequence is that of Casparian strip membrane protein 1 from Vigna unguiculata (Cowpea).